The chain runs to 636 residues: DNA-directed RNA polymerase III subunit RPC3 (636 aa).

The tract at residues 366–385 (SMQRRSQERSTHQGQSHKRL) is disordered. The segment at 563–584 (LAWNIANSIHKTEILKEENFTL) is leucine-zipper.

Belongs to the RNA polymerase beta chain family. As to quaternary structure, component of the RNA polymerase III (Pol III) complex consisting of 17 subunits.

Its subcellular location is the nucleus. Functionally, DNA-dependent RNA polymerase catalyzes the transcription of DNA into RNA using the four ribonucleoside triphosphates as substrates. Specific core component of RNA polymerase III which synthesizes small RNAs, such as 5S rRNA and tRNAs. In Eremothecium gossypii (strain ATCC 10895 / CBS 109.51 / FGSC 9923 / NRRL Y-1056) (Yeast), this protein is DNA-directed RNA polymerase III subunit RPC3 (RPC82).